Here is an 86-residue protein sequence, read N- to C-terminus: Large ribosomal subunit protein bL31 (86 aa).

Positions 65–86 are disordered; the sequence is YGMGSANSATSKEQKEEKDSNK. A compositionally biased stretch (basic and acidic residues) spans 76–86; it reads KEQKEEKDSNK.

It belongs to the bacterial ribosomal protein bL31 family. Type A subfamily. As to quaternary structure, part of the 50S ribosomal subunit.

Binds the 23S rRNA. This is Large ribosomal subunit protein bL31 from Prochlorococcus marinus (strain MIT 9312).